The chain runs to 354 residues: Squamosa promoter-binding-like protein 15 (354 aa).

Residues 1-25 (MELLMCSGQAESGGSSSTESSSLSG) form a disordered region. Residues 7 to 25 (SGQAESGGSSSTESSSLSG) are compositionally biased toward low complexity. The segment at 56-133 (TARCQVEGCR…ACHNERRRKP (78 aa)) adopts an SBP-type zinc-finger fold. The Zn(2+) site is built by cysteine 59, cysteine 64, cysteine 81, histidine 84, cysteine 100, cysteine 103, histidine 107, and cysteine 119. The short motif at 116 to 132 (KRSCRRRLACHNERRRK) is the Bipartite nuclear localization signal element.

The cofactor is Zn(2+).

It localises to the nucleus. Trans-acting factor that binds specifically to the consensus nucleotide sequence 5'-TNCGTACAA-3'. In Arabidopsis thaliana (Mouse-ear cress), this protein is Squamosa promoter-binding-like protein 15 (SPL15).